Here is a 567-residue protein sequence, read N- to C-terminus: Formate--tetrahydrofolate ligase (567 aa).

68-75 (TPLGEGKT) contributes to the ATP binding site.

The protein belongs to the formate--tetrahydrofolate ligase family.

It catalyses the reaction (6S)-5,6,7,8-tetrahydrofolate + formate + ATP = (6R)-10-formyltetrahydrofolate + ADP + phosphate. It participates in one-carbon metabolism; tetrahydrofolate interconversion. In Desulforamulus reducens (strain ATCC BAA-1160 / DSM 100696 / MI-1) (Desulfotomaculum reducens), this protein is Formate--tetrahydrofolate ligase.